The primary structure comprises 263 residues: 4-hydroxy-tetrahydrodipicolinate reductase (263 aa).

10–15 (GASGKM) contributes to the NAD(+) binding site. Arg38 lines the NADP(+) pocket. NAD(+)-binding positions include 97-99 (GTT) and 123-126 (APNF). Residue His153 is the Proton donor/acceptor of the active site. His154 contacts (S)-2,3,4,5-tetrahydrodipicolinate. The Proton donor role is filled by Lys157. 163–164 (GT) is a binding site for (S)-2,3,4,5-tetrahydrodipicolinate.

It belongs to the DapB family.

The protein localises to the cytoplasm. It carries out the reaction (S)-2,3,4,5-tetrahydrodipicolinate + NAD(+) + H2O = (2S,4S)-4-hydroxy-2,3,4,5-tetrahydrodipicolinate + NADH + H(+). The enzyme catalyses (S)-2,3,4,5-tetrahydrodipicolinate + NADP(+) + H2O = (2S,4S)-4-hydroxy-2,3,4,5-tetrahydrodipicolinate + NADPH + H(+). Its pathway is amino-acid biosynthesis; L-lysine biosynthesis via DAP pathway; (S)-tetrahydrodipicolinate from L-aspartate: step 4/4. Catalyzes the conversion of 4-hydroxy-tetrahydrodipicolinate (HTPA) to tetrahydrodipicolinate. The protein is 4-hydroxy-tetrahydrodipicolinate reductase of Dehalococcoides mccartyi (strain ATCC BAA-2266 / KCTC 15142 / 195) (Dehalococcoides ethenogenes (strain 195)).